The sequence spans 285 residues: Involucrin (285 aa).

Disordered regions lie at residues 1 to 93 (MSQQ…QEQK), 120 to 256 (LEQQ…AQVQ), and 266 to 285 (LPLI…PEHQ). The span at 27 to 39 (IDTQQEQVKQPTS) shows a compositional bias: polar residues. Composition is skewed to low complexity over residues 72–87 (EQQC…QKQQ), 120–129 (LEQQQEQQES), and 137–147 (EQCLEQQQEQQ). 3 stretches are compositionally biased toward basic and acidic residues: residues 149–165 (SQEK…KEEL), 175–185 (EQCEKHQEAKN), and 200–233 (QQKE…KEEQ). Positions 235-248 (LEQQGQQEGQLEQP) are enriched in low complexity. Over residues 272 to 285 (QHQKQEVHDPPEHQ) the composition is skewed to basic and acidic residues.

Belongs to the involucrin family. Directly or indirectly cross-linked to cornifelin (CNFN). In terms of processing, substrate of transglutaminase. Specific glutamines or lysines are cross-linked to keratins, desmoplakin and to inter involucrin molecules. In terms of tissue distribution, keratinocytes of epidermis and other stratified squamous epithelia.

The protein resides in the cytoplasm. Part of the insoluble cornified cell envelope (CE) of stratified squamous epithelia. The chain is Involucrin (IVL) from Canis lupus familiaris (Dog).